A 330-amino-acid polypeptide reads, in one-letter code: Glycerol-3-phosphate dehydrogenase [NAD(P)+] (330 aa).

Ser10, Trp11, Arg31, and Lys105 together coordinate NADPH. Lys105, Gly135, and Ser137 together coordinate sn-glycerol 3-phosphate. Ala139 lines the NADPH pocket. Lys190, Asp243, Ser253, Arg254, and Asn255 together coordinate sn-glycerol 3-phosphate. Lys190 serves as the catalytic Proton acceptor. Residue Arg254 coordinates NADPH. Positions 278 and 280 each coordinate NADPH.

Belongs to the NAD-dependent glycerol-3-phosphate dehydrogenase family.

It is found in the cytoplasm. It carries out the reaction sn-glycerol 3-phosphate + NAD(+) = dihydroxyacetone phosphate + NADH + H(+). The enzyme catalyses sn-glycerol 3-phosphate + NADP(+) = dihydroxyacetone phosphate + NADPH + H(+). Its pathway is membrane lipid metabolism; glycerophospholipid metabolism. In terms of biological role, catalyzes the reduction of the glycolytic intermediate dihydroxyacetone phosphate (DHAP) to sn-glycerol 3-phosphate (G3P), the key precursor for phospholipid synthesis. This Nitratidesulfovibrio vulgaris (strain DP4) (Desulfovibrio vulgaris) protein is Glycerol-3-phosphate dehydrogenase [NAD(P)+].